We begin with the raw amino-acid sequence, 600 residues long: DNA mismatch repair protein MutL (600 aa).

Positions 348-375 (QPQAQRPQTAWSAETSPFRPYQPTTGFS) are disordered. The segment covering 349–362 (PQAQRPQTAWSAET) has biased composition (polar residues).

The protein belongs to the DNA mismatch repair MutL/HexB family.

In terms of biological role, this protein is involved in the repair of mismatches in DNA. It is required for dam-dependent methyl-directed DNA mismatch repair. May act as a 'molecular matchmaker', a protein that promotes the formation of a stable complex between two or more DNA-binding proteins in an ATP-dependent manner without itself being part of a final effector complex. The chain is DNA mismatch repair protein MutL from Rhizobium leguminosarum bv. trifolii (strain WSM2304).